The sequence spans 111 residues: Cytochrome c6-like (111 aa).

An N-terminal signal peptide occupies residues 1-25 (MQKFLKLVLVTFLFLISTLTPPANA). Positions 39, 42, 43, and 83 each coordinate heme c.

The protein belongs to the cytochrome c family. PetJ subfamily. Post-translationally, binds 1 heme c group covalently per subunit.

It is found in the cellular thylakoid lumen. This Nostoc sp. (strain PCC 7120 / SAG 25.82 / UTEX 2576) protein is Cytochrome c6-like.